Here is a 107-residue protein sequence, read N- to C-terminus: uncharacterized protein (107 aa).

Residues 1-4 (MSLV) lie on the Cytoplasmic side of the membrane. Residues 5–25 (IDIADTIVSLTALIGLIITLI) traverse the membrane as a helical segment. The Extracellular segment spans residues 26-107 (KFHSQNKEDA…ELCRSSDRSK (82 aa)).

Its subcellular location is the host membrane. This is an uncharacterized protein from Acidianus sp. F28 (AFV-2).